Reading from the N-terminus, the 86-residue chain is MTRFVLFICCFFLIGMVVECKDGYLVGNDGCKYSCFTRPGTYCANECSRVKGKDGYCYAWMACYCYSMPNWVKTWDRATNRCGRGK.

Positions 1 to 20 (MTRFVLFICCFFLIGMVVEC) are cleaved as a signal peptide. The 63-residue stretch at 21-83 (KDGYLVGNDG…TWDRATNRCG (63 aa)) folds into the LCN-type CS-alpha/beta domain. 4 disulfides stabilise this stretch: Cys31–Cys82, Cys35–Cys57, Cys43–Cys63, and Cys47–Cys65. Arg84 is subject to Arginine amide.

The protein belongs to the long (4 C-C) scorpion toxin superfamily. Sodium channel inhibitor family. Beta subfamily. In terms of tissue distribution, expressed by the venom gland.

It localises to the secreted. Beta toxins bind voltage-independently at site-4 of sodium channels (Nav) and shift the voltage of activation toward more negative potentials thereby affecting sodium channel activation and promoting spontaneous and repetitive firing. Strongly affects skeletal muscle channels Nav1.4/SCN4A, poorly affects the neuronal channels Nav1.6/SCN8A and Nav1.2/SCN2A. Induces spastic paralysis of rear limbs, increased salivation, apnea, tachycardia and increased perspiration. The chain is Beta-toxin Tz1 from Tityus zulianus (Venezuelan scorpion).